The chain runs to 141 residues: ATP synthase epsilon chain (141 aa).

It belongs to the ATPase epsilon chain family. As to quaternary structure, F-type ATPases have 2 components, CF(1) - the catalytic core - and CF(0) - the membrane proton channel. CF(1) has five subunits: alpha(3), beta(3), gamma(1), delta(1), epsilon(1). CF(0) has three main subunits: a, b and c.

It localises to the cell inner membrane. Produces ATP from ADP in the presence of a proton gradient across the membrane. This Paraburkholderia phymatum (strain DSM 17167 / CIP 108236 / LMG 21445 / STM815) (Burkholderia phymatum) protein is ATP synthase epsilon chain.